A 297-amino-acid polypeptide reads, in one-letter code: Transmembrane protein 178A (297 aa).

An N-terminal signal peptide occupies residues 1–25; the sequence is MEPRALVTALSLGLSLCSLGLLVTA. The Extracellular segment spans residues 26-179; it reads IFTDHWYETD…LLHLRRITAG (154 aa). Residues 41–57 are compositionally biased toward basic and acidic residues; it reads ESCERSRAGADPPDQKN. The interval 41–86 is disordered; that stretch reads ESCERSRAGADPPDQKNRLMPLSHLPLRDSPPLGRRLLPGGPGRSD. Residues 68-79 show a composition bias toward low complexity; sequence RDSPPLGRRLLP. Residue asparagine 158 is glycosylated (N-linked (GlcNAc...) asparagine). The helical transmembrane segment at 180 to 200 threads the bilayer; that stretch reads FLGMAVAVLLCGCIVATVSFF. The Cytoplasmic portion of the chain corresponds to 201–208; sequence WEESLTQH. A helical membrane pass occupies residues 209–229; it reads VAGLLFLMTGIFCTISLCTYA. At 230–257 the chain is on the extracellular side; sequence ASVSYDLNRVPKLIYSLPHDVEHGYSWS. The helical transmembrane segment at 258-278 threads the bilayer; that stretch reads IFCAWCSLGFIVAAGGLCIAY. At 279 to 297 the chain is on the cytoplasmic side; sequence PFISRTKIAHLKSGRDSTV.

It belongs to the TMEM178 family. In terms of assembly, interacts with STIM1. In terms of tissue distribution, highly expressed in the bone and its expression increases during osteoclastogenesis.

The protein localises to the endoplasmic reticulum membrane. Functionally, acts as a negative regulator of osteoclast differentiation in basal and inflammatory conditions by regulating TNFSF11-induced Ca (2+) fluxes, thereby controlling the induction of NFATC1. The protein is Transmembrane protein 178A (Tmem178a) of Mus musculus (Mouse).